The primary structure comprises 372 residues: Glutamate 5-kinase (372 aa).

K14 serves as a coordination point for ATP. Residues S54, D141, and N153 each contribute to the substrate site. Residues 173 to 174 (TD) and 215 to 221 (TGGMSTK) contribute to the ATP site. A PUA domain is found at 280–358 (QGSLVLDAGA…DEIESVLGYD (79 aa)).

The protein belongs to the glutamate 5-kinase family.

The protein resides in the cytoplasm. The catalysed reaction is L-glutamate + ATP = L-glutamyl 5-phosphate + ADP. The protein operates within amino-acid biosynthesis; L-proline biosynthesis; L-glutamate 5-semialdehyde from L-glutamate: step 1/2. In terms of biological role, catalyzes the transfer of a phosphate group to glutamate to form L-glutamate 5-phosphate. In Shewanella oneidensis (strain ATCC 700550 / JCM 31522 / CIP 106686 / LMG 19005 / NCIMB 14063 / MR-1), this protein is Glutamate 5-kinase.